The following is a 612-amino-acid chain: PAN2-PAN3 deadenylation complex subunit PAN3 (612 aa).

The C3H1-type zinc finger occupies 10-39 (WAKDTPCKNITIYGYCKYENDGCIFNHGKP). Residues 44 to 62 (SNTGGAAAGSAEDSAASGG) are compositionally biased toward low complexity. Positions 44–64 (SNTGGAAAGSAEDSAASGGVT) are disordered. Short sequence motifs (PABPC-interacting motif-2 (PAM-2)) lie at residues 84–104 (SVAI…IVSS) and 111–131 (TAFT…SANV). The tract at residues 231-481 (QVFPSDGNLP…TIAEFTALFS (251 aa)) is pseudokinase domain. ATP-binding positions include Arg-286, 336–343 (DYYPQSNS), and 389–390 (DK). Residues 482–520 (HKMLDIISSSQTYSEYIEQHLSRELENGRLFRLMCKLNF) adopt a coiled-coil conformation. The segment at 521–612 (IFGRMESSMD…IDSTFRSMTQ (92 aa)) is knob domain.

This sequence belongs to the protein kinase superfamily. PAN3 family. Homodimer. Forms a heterotrimer with a catalytic subunit PAN2 to form the poly(A)-nuclease (PAN) deadenylation complex. Interacts (via PAM-2 motif) with poly(A)-binding protein PAB1 (via PABC domain), conferring substrate specificity of the enzyme complex.

Its subcellular location is the cytoplasm. In terms of biological role, regulatory subunit of the poly(A)-nuclease (PAN) deadenylation complex, one of two cytoplasmic mRNA deadenylases involved in mRNA turnover. PAN specifically shortens poly(A) tails of RNA and the activity is stimulated by poly(A)-binding protein PAB1. PAN deadenylation is followed by rapid degradation of the shortened mRNA tails by the CCR4-NOT complex. Deadenylated mRNAs are then degraded by two alternative mechanisms, namely exosome-mediated 3'-5' exonucleolytic degradation, or deadenylation-dependent mRNA decaping and subsequent 5'-3' exonucleolytic degradation by XRN1. May also be involved in post-transcriptional maturation of mRNA poly(A) tails. PAN3 acts as a positive regulator for PAN activity, recruiting the catalytic subunit PAN2 to mRNA via its interaction with RNA and with PAB1. This Eremothecium gossypii (strain ATCC 10895 / CBS 109.51 / FGSC 9923 / NRRL Y-1056) (Yeast) protein is PAN2-PAN3 deadenylation complex subunit PAN3.